A 379-amino-acid chain; its full sequence is Glucose-1-phosphate adenylyltransferase (379 aa).

Alpha-D-glucose 1-phosphate-binding positions include tyrosine 99, glycine 164, 179-180, and serine 190; that span reads EK.

Belongs to the bacterial/plant glucose-1-phosphate adenylyltransferase family. In terms of assembly, homotetramer.

It carries out the reaction alpha-D-glucose 1-phosphate + ATP + H(+) = ADP-alpha-D-glucose + diphosphate. The protein operates within glycan biosynthesis; glycogen biosynthesis. In terms of biological role, involved in the biosynthesis of ADP-glucose, a building block required for the elongation reactions to produce glycogen. Catalyzes the reaction between ATP and alpha-D-glucose 1-phosphate (G1P) to produce pyrophosphate and ADP-Glc. The chain is Glucose-1-phosphate adenylyltransferase from Bacillus licheniformis (strain ATCC 14580 / DSM 13 / JCM 2505 / CCUG 7422 / NBRC 12200 / NCIMB 9375 / NCTC 10341 / NRRL NRS-1264 / Gibson 46).